Reading from the N-terminus, the 356-residue chain is Phospho-N-acetylmuramoyl-pentapeptide-transferase (356 aa).

A run of 10 helical transmembrane segments spans residues Ala27–Leu47, Thr73–Leu93, Phe97–Tyr117, Leu134–Thr154, Gly163–Phe183, Gly195–Ser215, Ala232–Phe252, Ala258–Val278, Val285–Phe305, and Thr333–Leu353.

The protein belongs to the glycosyltransferase 4 family. MraY subfamily. Mg(2+) is required as a cofactor.

It localises to the cell inner membrane. The enzyme catalyses UDP-N-acetyl-alpha-D-muramoyl-L-alanyl-gamma-D-glutamyl-meso-2,6-diaminopimeloyl-D-alanyl-D-alanine + di-trans,octa-cis-undecaprenyl phosphate = di-trans,octa-cis-undecaprenyl diphospho-N-acetyl-alpha-D-muramoyl-L-alanyl-D-glutamyl-meso-2,6-diaminopimeloyl-D-alanyl-D-alanine + UMP. The protein operates within cell wall biogenesis; peptidoglycan biosynthesis. Functionally, catalyzes the initial step of the lipid cycle reactions in the biosynthesis of the cell wall peptidoglycan: transfers peptidoglycan precursor phospho-MurNAc-pentapeptide from UDP-MurNAc-pentapeptide onto the lipid carrier undecaprenyl phosphate, yielding undecaprenyl-pyrophosphoryl-MurNAc-pentapeptide, known as lipid I. The polypeptide is Phospho-N-acetylmuramoyl-pentapeptide-transferase (Sphingopyxis alaskensis (strain DSM 13593 / LMG 18877 / RB2256) (Sphingomonas alaskensis)).